Reading from the N-terminus, the 978-residue chain is Sensor histidine kinase TodS (978 aa).

One can recognise a PAS 1 domain in the interval 32 to 103 (CEEHARIIFD…TQKRLVETAS (72 aa)). In terms of domain architecture, PAC 1 spans 108–162 (VRCDVEILGKSGGREVIAVDFSLLPICNEEGSIVYLLAEGRNITDKKKAEAMLAL). The Histidine kinase 1 domain occupies 187–405 (KVSHELRTPL…LFQVKLPLNA (219 aa)). At H190 the chain carries Phosphohistidine; by autocatalysis. One can recognise a Response regulatory domain in the interval 452–567 (RVLIVEDNPD…ELRARVSNLV (116 aa)). D500 bears the 4-aspartylphosphate mark. The PAS 2 domain maps to 611–681 (SEARWKAVYE…QRLANLLQGG (71 aa)). In terms of domain architecture, PAC 2 spans 685-737 (YSVERSYLCKNGSTIWANASVSLMPQRVGESPVILQIIDDITEKKQAQENLNQ). The Histidine kinase 2 domain maps to 757–974 (YIAHEINQPL…CFLVSIPARQ (218 aa)). Phosphohistidine is present on H760.

As to quaternary structure, homodimer. Binds as a dimer to a pseudopalindromic sequence. Post-translationally, autophosphorylated. Activation requires a sequential transfer of a phosphate group from a His in the primary transmitter domain, to an Asp in the receiver domain and to a His in the secondary transmitter domain.

The protein localises to the cytoplasm. The catalysed reaction is ATP + protein L-histidine = ADP + protein N-phospho-L-histidine.. In terms of biological role, member of the two-component regulatory system TodS/TodT involved in the regulation of toluene degradation. Phosphorylates TodT via a four-step phosphorelay in response to toluene. This chain is Sensor histidine kinase TodS (todS), found in Pseudomonas putida (strain ATCC 700007 / DSM 6899 / JCM 31910 / BCRC 17059 / LMG 24140 / F1).